Consider the following 337-residue polypeptide: Glyceraldehyde-3-phosphate dehydrogenase, cytosolic (337 aa).

Residues 13-14 (RI), Asp35, and Arg82 contribute to the NAD(+) site. D-glyceraldehyde 3-phosphate contacts are provided by residues 153–155 (SCT), Thr184, 213–214 (TG), and Arg236. The active-site Nucleophile is Cys154. Asn318 contacts NAD(+).

Belongs to the glyceraldehyde-3-phosphate dehydrogenase family. As to quaternary structure, homotetramer.

The protein localises to the cytoplasm. The enzyme catalyses D-glyceraldehyde 3-phosphate + phosphate + NAD(+) = (2R)-3-phospho-glyceroyl phosphate + NADH + H(+). The protein operates within carbohydrate degradation; glycolysis; pyruvate from D-glyceraldehyde 3-phosphate: step 1/5. Functionally, key enzyme in glycolysis that catalyzes the first step of the pathway by converting D-glyceraldehyde 3-phosphate (G3P) into 3-phospho-D-glyceroyl phosphate. Essential for the maintenance of cellular ATP levels and carbohydrate metabolism. The polypeptide is Glyceraldehyde-3-phosphate dehydrogenase, cytosolic (GAPC) (Craterostigma plantagineum (Blue gem)).